Consider the following 128-residue polypeptide: Small ribosomal subunit protein bS6 (128 aa).

It belongs to the bacterial ribosomal protein bS6 family.

In terms of biological role, binds together with bS18 to 16S ribosomal RNA. The sequence is that of Small ribosomal subunit protein bS6 from Leifsonia xyli subsp. xyli (strain CTCB07).